We begin with the raw amino-acid sequence, 510 residues long: Cytochrome P450 monooxygenase BOT1 (510 aa).

A helical membrane pass occupies residues 16-36; that stretch reads PLAWAALILASFTLYSVQLVV. Cys-454 contributes to the heme binding site. Asn-476 carries N-linked (GlcNAc...) asparagine glycosylation.

Belongs to the cytochrome P450 family. It depends on heme as a cofactor.

The protein localises to the membrane. It functions in the pathway secondary metabolite biosynthesis. Cytochrome P450 monooxygenase; part of the gene cluster that mediates the biosynthesis of botrydial. Botrydial is necessary for colonization of plant tissue by the T4 strain. It is a strain-dependent virulence factor since highly aggressive strains like SAS56 or B05 still retain substantial virulence when botrydial synthesis is impaired, since they produce also botcinic acid. The first step of botrydial biosynthesis is performed by the sesquiterpene synthase BOT2 which catalyzes the cyclization of farnesyl diphosphate (FPP) to presilphiperfolan-8-beta-ol (PSP). The cytochrome P450 monooxygenase BOT4 then catalyzes the hydroxylation at C-4 to give a probotryane intermediate. Acetylation of the hydroxyl at C-4 is carried out by the acetyltransferase BOT5, followed by the combined action of the P450 monooxygenases BOT3 and BOT1, to yield finally the glycol, via the regio- and stereospecific hydroxylations at C-10 and C-15 of the probotryane intermediates, respectively. The cleavage of the C10-C15 bond of probotryane skeleton is an intriguing and chemically important reaction, which could be mediated by some of the monooxygenases or by a combination of them. It is possible that either BOT3 or BOT1 would oxidize either the 10- or the 15-hydroxy group to the hydroperoxide derivative, which would then undergo heterolytic fragmentation to give the dialdehyde botrydial. Finally, the dehydrogenase BOT7 might be involved in the conversion of botrydial to dihydrobotrydial. This is Cytochrome P450 monooxygenase BOT1 from Botryotinia fuckeliana (Noble rot fungus).